Consider the following 135-residue polypeptide: Class I hydrophobin 2 (135 aa).

The first 20 residues, 1-20 (MFARLTSTLFALAAVSAVFA), serve as a signal peptide directing secretion. 4 cysteine pairs are disulfide-bonded: Cys29–Cys114, Cys36–Cys107, Cys37–Cys73, and Cys115–Cys128. Asn117 and Asn132 each carry an N-linked (GlcNAc...) asparagine glycan.

This sequence belongs to the fungal hydrophobin family. In terms of assembly, self-assembles to form functional amyloid fibrils called rodlets. Self-assembly into fibrillar rodlets occurs spontaneously at hydrophobic:hydrophilic interfaces and the rodlets further associate laterally to form amphipathic monolayers.

It localises to the secreted. The protein resides in the cell wall. Functionally, aerial growth, conidiation, and dispersal of filamentous fungi in the environment rely upon a capability of their secreting small amphipathic proteins called hydrophobins (HPBs) with low sequence identity. Class I can self-assemble into an outermost layer of rodlet bundles on aerial cell surfaces, conferring cellular hydrophobicity that supports fungal growth, development and dispersal; whereas Class II form highly ordered films at water-air interfaces through intermolecular interactions but contribute nothing to the rodlet structure. The polypeptide is Class I hydrophobin 2 (Coprinopsis cinerea (strain Okayama-7 / 130 / ATCC MYA-4618 / FGSC 9003) (Inky cap fungus)).